Reading from the N-terminus, the 285-residue chain is Probable glucose uptake protein GlcU (285 aa).

A run of 10 helical transmembrane segments spans residues 4–21 (FLAILPAIFWGSIVLFNV), 26–48 (GPYSQTLGTTFGALIFSIVVYIF), 52–71 (VLTPTVIGVGIVSGLFWALG), 84–106 (VSRTMPISTGLQLVSTTLFGVIV), 110–132 (WSTIISVVLGVLALVCIIIGVIL), 153–175 (IIILLISTVGYLVYVVVIRLFNV), 180–197 (ALLPQAVGMVLGGILLTF), 210–227 (IIPGLIWAAGNMFLFISQ), 232–254 (VATSFSLSQMGIIISTLGGILIL), and 266–283 (IVVGIVFIIAAGIMLGIA).

Belongs to the GRP transporter (TC 2.A.7.5) family.

The protein localises to the cell membrane. Functionally, involved in the uptake of glucose. This chain is Probable glucose uptake protein GlcU (glcU), found in Bacillus anthracis.